A 78-amino-acid polypeptide reads, in one-letter code: Conotoxin Cal6.3a (78 aa).

The signal sequence occupies residues methionine 1 to alanine 21. The propeptide occupies methionine 22–proline 26. 3 cysteine pairs are disulfide-bonded: cysteine 38-cysteine 49, cysteine 41-cysteine 53, and cysteine 48-cysteine 56. Glutamine 76 carries the glutamine amide modification.

As to expression, expressed by the venom duct.

The protein localises to the secreted. Probable neurotoxin with unknown target. Possibly targets ion channels. The sequence is that of Conotoxin Cal6.3a from Californiconus californicus (California cone).